A 250-amino-acid polypeptide reads, in one-letter code: 3-deoxy-manno-octulosonate cytidylyltransferase (250 aa).

This sequence belongs to the KdsB family.

Its subcellular location is the cytoplasm. It catalyses the reaction 3-deoxy-alpha-D-manno-oct-2-ulosonate + CTP = CMP-3-deoxy-beta-D-manno-octulosonate + diphosphate. Its pathway is nucleotide-sugar biosynthesis; CMP-3-deoxy-D-manno-octulosonate biosynthesis; CMP-3-deoxy-D-manno-octulosonate from 3-deoxy-D-manno-octulosonate and CTP: step 1/1. It participates in bacterial outer membrane biogenesis; lipopolysaccharide biosynthesis. Functionally, activates KDO (a required 8-carbon sugar) for incorporation into bacterial lipopolysaccharide in Gram-negative bacteria. The chain is 3-deoxy-manno-octulosonate cytidylyltransferase from Actinobacillus pleuropneumoniae serotype 7 (strain AP76).